The sequence spans 943 residues: Isoleucine--tRNA ligase (943 aa).

The 'HIGH' region motif lies at 58 to 68; sequence PYANGSIHIGH. Glu567 contributes to the L-isoleucyl-5'-AMP binding site. A 'KMSKS' region motif is present at residues 608–612; it reads KMSKS. Lys611 serves as a coordination point for ATP. Residues Cys906, Cys909, Cys926, and Cys929 each contribute to the Zn(2+) site.

The protein belongs to the class-I aminoacyl-tRNA synthetase family. IleS type 1 subfamily. In terms of assembly, monomer. Zn(2+) serves as cofactor.

Its subcellular location is the cytoplasm. The enzyme catalyses tRNA(Ile) + L-isoleucine + ATP = L-isoleucyl-tRNA(Ile) + AMP + diphosphate. Functionally, catalyzes the attachment of isoleucine to tRNA(Ile). As IleRS can inadvertently accommodate and process structurally similar amino acids such as valine, to avoid such errors it has two additional distinct tRNA(Ile)-dependent editing activities. One activity is designated as 'pretransfer' editing and involves the hydrolysis of activated Val-AMP. The other activity is designated 'posttransfer' editing and involves deacylation of mischarged Val-tRNA(Ile). This Pseudomonas aeruginosa (strain LESB58) protein is Isoleucine--tRNA ligase.